The primary structure comprises 55 residues: Regulatory protein MokB (55 aa).

Overlapping regulatory peptide whose translation enables hokB expression. This Escherichia coli (strain K12) protein is Regulatory protein MokB (mokB).